We begin with the raw amino-acid sequence, 83 residues long: Cytochrome b559 subunit alpha (83 aa).

A helical transmembrane segment spans residues valine 21 to tryptophan 35. Histidine 23 provides a ligand contact to heme.

The protein belongs to the PsbE/PsbF family. Heterodimer of an alpha subunit and a beta subunit. PSII is composed of 1 copy each of membrane proteins PsbA, PsbB, PsbC, PsbD, PsbE, PsbF, PsbH, PsbI, PsbJ, PsbK, PsbL, PsbM, PsbT, PsbX, PsbY, PsbZ, Psb30/Ycf12, at least 3 peripheral proteins of the oxygen-evolving complex and a large number of cofactors. It forms dimeric complexes. Heme b serves as cofactor.

It localises to the plastid. The protein localises to the chloroplast thylakoid membrane. Its function is as follows. This b-type cytochrome is tightly associated with the reaction center of photosystem II (PSII). PSII is a light-driven water:plastoquinone oxidoreductase that uses light energy to abstract electrons from H(2)O, generating O(2) and a proton gradient subsequently used for ATP formation. It consists of a core antenna complex that captures photons, and an electron transfer chain that converts photonic excitation into a charge separation. The protein is Cytochrome b559 subunit alpha of Oltmannsiellopsis viridis (Marine flagellate).